We begin with the raw amino-acid sequence, 175 residues long: Riboflavin kinase (175 aa).

Residue 54-59 participates in CDP binding; the sequence is GLGEGK. Residues Thr83 and Asn85 each contribute to the Mg(2+) site. FMN is bound by residues Thr142 and Glu150. 155–158 serves as a coordination point for CDP; it reads FHLR.

This sequence belongs to the archaeal riboflavin kinase family. It depends on Mg(2+) as a cofactor.

It carries out the reaction riboflavin + CTP = CDP + FMN + H(+). The protein operates within cofactor biosynthesis; FMN biosynthesis; FMN from riboflavin (CTP route): step 1/1. Functionally, catalyzes the CTP-dependent phosphorylation of riboflavin (vitamin B2) to form flavin mononucleotide (FMN). In Saccharolobus solfataricus (strain ATCC 35092 / DSM 1617 / JCM 11322 / P2) (Sulfolobus solfataricus), this protein is Riboflavin kinase.